The sequence spans 166 residues: Ribosome maturation factor RimP (166 aa).

It belongs to the RimP family.

It localises to the cytoplasm. Functionally, required for maturation of 30S ribosomal subunits. The polypeptide is Ribosome maturation factor RimP (Psychrobacter cryohalolentis (strain ATCC BAA-1226 / DSM 17306 / VKM B-2378 / K5)).